Consider the following 492-residue polypeptide: Probable glycine dehydrogenase (decarboxylating) subunit 2 (492 aa).

Lysine 274 is modified (N6-(pyridoxal phosphate)lysine).

It belongs to the GcvP family. C-terminal subunit subfamily. As to quaternary structure, the glycine cleavage system is composed of four proteins: P, T, L and H. In this organism, the P 'protein' is a heterodimer of two subunits. Pyridoxal 5'-phosphate serves as cofactor.

The enzyme catalyses N(6)-[(R)-lipoyl]-L-lysyl-[glycine-cleavage complex H protein] + glycine + H(+) = N(6)-[(R)-S(8)-aminomethyldihydrolipoyl]-L-lysyl-[glycine-cleavage complex H protein] + CO2. The glycine cleavage system catalyzes the degradation of glycine. The P protein binds the alpha-amino group of glycine through its pyridoxal phosphate cofactor; CO(2) is released and the remaining methylamine moiety is then transferred to the lipoamide cofactor of the H protein. In Staphylococcus haemolyticus (strain JCSC1435), this protein is Probable glycine dehydrogenase (decarboxylating) subunit 2.